Consider the following 449-residue polypeptide: Aspartyl protease AED3 (449 aa).

The N-terminal stretch at methionine 1–alanine 23 is a signal peptide. In terms of domain architecture, Peptidase A1 spans tyrosine 104–alanine 444. Aspartate 122 is a catalytic residue. Cysteines 132 and 138 form a disulfide. Asparagine 140, asparagine 148, asparagine 184, asparagine 211, and asparagine 297 each carry an N-linked (GlcNAc...) asparagine glycan. Residue aspartate 328 is part of the active site. The N-linked (GlcNAc...) asparagine glycan is linked to asparagine 353. An intrachain disulfide couples cysteine 366 to cysteine 405.

This sequence belongs to the peptidase A1 family.

The protein resides in the secreted. It is found in the extracellular space. Its subcellular location is the apoplast. In Arabidopsis thaliana (Mouse-ear cress), this protein is Aspartyl protease AED3.